Reading from the N-terminus, the 245-residue chain is MLYIFRLIITVIYSILVCVFGSIYCLFSPRNPKHVATFGHMFGRLAPLFGLKVECRKPTDAESYGNAIYIANHQNNYDMVTASNIVQPPTVTVGKKSLLWIPFFGQLYWLTGNLLIDRNNRTKAHGTIAEVVNHFKKRRISIWMFPEGTRSRGRGLLPFKTGAFHAAIAAGVPIIPVCVSTTSNKINLNRLHNGLVIVEMLPPIDVSQYGKDQVRELAAHCRSIMEQKIAELDKEVAEREAAGKV.

Met1 carries the N-formylmethionine modification. The HXXXXD motif motif lies at 73–78 (HQNNYD).

It belongs to the 1-acyl-sn-glycerol-3-phosphate acyltransferase family.

The protein resides in the cell inner membrane. The catalysed reaction is a 1-acyl-sn-glycero-3-phosphate + an acyl-CoA = a 1,2-diacyl-sn-glycero-3-phosphate + CoA. The enzyme catalyses a fatty acyl-[ACP] + a 1-acyl-sn-glycero-3-phosphate = a 1,2-diacyl-sn-glycero-3-phosphate + holo-[ACP]. The protein operates within phospholipid metabolism; CDP-diacylglycerol biosynthesis; CDP-diacylglycerol from sn-glycerol 3-phosphate: step 2/3. Its function is as follows. Converts lysophosphatidic acid (LPA) into phosphatidic acid by incorporating an acyl moiety at the 2 position. This enzyme can utilize either acyl-CoA or acyl-ACP as the fatty acyl donor. In Escherichia coli (strain K12), this protein is 1-acyl-sn-glycerol-3-phosphate acyltransferase (plsC).